The primary structure comprises 475 residues: Kynureninase (475 aa).

Pyridoxal 5'-phosphate contacts are provided by residues Leu141, Thr142, 169–172 (FPSD), Asp254, His257, and Tyr279. Lys280 bears the N6-(pyridoxal phosphate)lysine mark. Residues Trp319 and Asn347 each coordinate pyridoxal 5'-phosphate.

The protein belongs to the kynureninase family. As to quaternary structure, homodimer. Requires pyridoxal 5'-phosphate as cofactor.

The protein localises to the cytoplasm. The catalysed reaction is L-kynurenine + H2O = anthranilate + L-alanine + H(+). It catalyses the reaction 3-hydroxy-L-kynurenine + H2O = 3-hydroxyanthranilate + L-alanine + H(+). It functions in the pathway amino-acid degradation; L-kynurenine degradation; L-alanine and anthranilate from L-kynurenine: step 1/1. It participates in cofactor biosynthesis; NAD(+) biosynthesis; quinolinate from L-kynurenine: step 2/3. Its function is as follows. Catalyzes the cleavage of L-kynurenine (L-Kyn) and L-3-hydroxykynurenine (L-3OHKyn) into anthranilic acid (AA) and 3-hydroxyanthranilic acid (3-OHAA), respectively. The sequence is that of Kynureninase (bna5) from Sclerotinia sclerotiorum (strain ATCC 18683 / 1980 / Ss-1) (White mold).